The following is a 750-amino-acid chain: Neprilysin (750 aa).

The segment covering 1 to 14 (MGRSESQMDITDIN) has biased composition (polar residues). Residues 1–20 (MGRSESQMDITDINTPKPKK) form a disordered region. Gly-2 carries N-myristoyl glycine lipidation. Residues 2-28 (GRSESQMDITDINTPKPKKKQRWTPLE) lie on the Cytoplasmic side of the membrane. Phosphoserine is present on residues Ser-4 and Ser-6. A Stop-transfer sequence motif is present at residues 16–23 (PKPKKKQR). The helical; Signal-anchor for type II membrane protein transmembrane segment at 29 to 51 (ISLSVLVLLLTVIAVTMIALYAT) threads the bilayer. Residues 52-750 (YDDGICKSSD…MNPEKKCRVW (699 aa)) are Extracellular-facing. The region spanning 56–750 (ICKSSDCIKS…MNPEKKCRVW (695 aa)) is the Peptidase M13 domain. Disulfide bonds link Cys-57–Cys-62, Cys-80–Cys-735, Cys-88–Cys-695, Cys-143–Cys-411, Cys-234–Cys-242, and Cys-621–Cys-747. Position 103 (Arg-103) interacts with a peptide. N-linked (GlcNAc...) asparagine glycosylation is present at Asn-145. Asn-285, Asn-311, and Asn-325 each carry an N-linked (GlcNAc...) asparagine glycan. Residue His-584 coordinates Zn(2+). Residue Glu-585 is part of the active site. His-588 provides a ligand contact to Zn(2+). Asn-628 is a glycosylation site (N-linked (GlcNAc...) asparagine). Glu-647 is a binding site for Zn(2+). Asp-651 (proton donor) is an active-site residue.

This sequence belongs to the peptidase M13 family. Zn(2+) serves as cofactor. Post-translationally, myristoylation is a determinant of membrane targeting. Glycosylation at Asn-628 is necessary both for surface expression and neutral endopeptidase activity.

It localises to the cell membrane. The enzyme catalyses Preferential cleavage of polypeptides between hydrophobic residues, particularly with Phe or Tyr at P1'.. The catalysed reaction is substance P + H2O = substance P(1-9) + L-Leu-L-Met-NH2. It catalyses the reaction substance P + H2O = substance P(1-7) + L-Phe-Gly-L-Leu-L-Met-NH2. It carries out the reaction neurotensin + H2O = neurotensin(1-11) + L-isoleucyl-L-leucine. The enzyme catalyses neurotensin + H2O = neurotensin(1-10) + L-tyrosyl-L-isoleucyl-L-leucine. Inhibited by mixanpril, an orally-active drug used for the treatment of hypertension. Functionally, thermolysin-like specificity, but is almost confined on acting on polypeptides of up to 30 amino acids. Biologically important in the destruction of opioid peptides such as Met- and Leu-enkephalins by cleavage of a Gly-Phe bond. Catalyzes cleavage of bradykinin, substance P and neurotensin peptides. Able to cleave angiotensin-1, angiotensin-2 and angiotensin 1-9. Involved in the degradation of atrial natriuretic factor (ANF) and brain natriuretic factor (BNP(1-32)). Displays UV-inducible elastase activity toward skin preelastic and elastic fibers. The polypeptide is Neprilysin (MME) (Oryctolagus cuniculus (Rabbit)).